A 105-amino-acid polypeptide reads, in one-letter code: Nucleoid-associated protein EAT1b_1710 (105 aa).

The segment covering 1–16 (MRGMGNMNNMMKQMQK) has biased composition (low complexity). The disordered stretch occupies residues 1–26 (MRGMGNMNNMMKQMQKMQKDMAKAQE). Over residues 17-26 (MQKDMAKAQE) the composition is skewed to basic and acidic residues.

Belongs to the YbaB/EbfC family. In terms of assembly, homodimer.

It is found in the cytoplasm. It localises to the nucleoid. Binds to DNA and alters its conformation. May be involved in regulation of gene expression, nucleoid organization and DNA protection. In Exiguobacterium sp. (strain ATCC BAA-1283 / AT1b), this protein is Nucleoid-associated protein EAT1b_1710.